Reading from the N-terminus, the 115-residue chain is Large ribosomal subunit protein bL19 (115 aa).

It belongs to the bacterial ribosomal protein bL19 family.

Functionally, this protein is located at the 30S-50S ribosomal subunit interface and may play a role in the structure and function of the aminoacyl-tRNA binding site. The chain is Large ribosomal subunit protein bL19 from Leifsonia xyli subsp. xyli (strain CTCB07).